A 467-amino-acid chain; its full sequence is Zinc finger and BTB domain-containing protein 43 (467 aa).

Met1 is subject to N-acetylmethionine. The region spanning 33–97 (CDVSIVVQGH…SYTGRLVMPA (65 aa)) is the BTB domain. Disordered regions lie at residues 134–153 (LNHG…GLVE) and 162–227 (HTDF…EFHY). Residues 140–149 (HQSPSSSNYN) show a composition bias toward polar residues. 2 stretches are compositionally biased toward basic and acidic residues: residues 164–174 (DFPKAQELRDG) and 182–194 (KDEL…EHEY). Residues Lys182, Lys247, Lys297, and Lys358 each participate in a glycyl lysine isopeptide (Lys-Gly) (interchain with G-Cter in SUMO2) cross-link. A C2H2-type 1; atypical zinc finger spans residues 373–394 (YPCQCGKSFTHKSQRDRHMSMH). A C2H2-type 2 zinc finger spans residues 400 to 422 (YGCSVCGKKFKMKHHLVGHMKIH). Residue Thr423 is modified to Phosphothreonine. The segment at 428 to 450 (YECNICAKRFMWRDSFHRHVTSC) adopts a C2H2-type 3; atypical zinc-finger fold. Lys458 is covalently cross-linked (Glycyl lysine isopeptide (Lys-Gly) (interchain with G-Cter in SUMO2)).

Belongs to the krueppel C2H2-type zinc-finger protein family. Interacts with BDP1.

The protein resides in the nucleus. In terms of biological role, may be involved in transcriptional regulation. This chain is Zinc finger and BTB domain-containing protein 43 (Zbtb43), found in Mus musculus (Mouse).